We begin with the raw amino-acid sequence, 97 residues long: Citrate lyase acyl carrier protein (97 aa).

Position 14 is an O-(phosphoribosyl dephospho-coenzyme A)serine (Ser14).

This sequence belongs to the CitD family. In terms of assembly, oligomer with a subunit composition of (alpha,beta,gamma)6.

It localises to the cytoplasm. Its function is as follows. Covalent carrier of the coenzyme of citrate lyase. The sequence is that of Citrate lyase acyl carrier protein from Lactobacillus acidophilus (strain ATCC 700396 / NCK56 / N2 / NCFM).